The sequence spans 48 residues: uncharacterized protein (48 aa).

This is an uncharacterized protein from His1 virus (isolate Australia/Victoria) (His1V).